The chain runs to 303 residues: Putative deoxyribose-phosphate aldolase (303 aa).

Aspartate 157 (proton donor/acceptor) is an active-site residue. Lysine 220 serves as the catalytic Schiff-base intermediate with acetaldehyde. Catalysis depends on lysine 256, which acts as the Proton donor/acceptor.

This sequence belongs to the DeoC/FbaB aldolase family. DeoC type 2 subfamily.

It carries out the reaction 2-deoxy-D-ribose 5-phosphate = D-glyceraldehyde 3-phosphate + acetaldehyde. The protein operates within carbohydrate degradation; 2-deoxy-D-ribose 1-phosphate degradation; D-glyceraldehyde 3-phosphate and acetaldehyde from 2-deoxy-alpha-D-ribose 1-phosphate: step 2/2. Its function is as follows. Catalyzes a reversible aldol reaction between acetaldehyde and D-glyceraldehyde 3-phosphate to generate 2-deoxy-D-ribose 5-phosphate. The chain is Putative deoxyribose-phosphate aldolase from Caenorhabditis elegans.